The primary structure comprises 159 residues: Small ribosomal subunit protein uS7m (159 aa).

Belongs to the universal ribosomal protein uS7 family. As to quaternary structure, part of the small ribosomal subunit.

It localises to the mitochondrion. Its function is as follows. One of the primary rRNA binding proteins, it binds directly to the small rRNA where it nucleates assembly of the head domain of the small subunit. This is Small ribosomal subunit protein uS7m (RPS7) from Reclinomonas americana.